A 370-amino-acid polypeptide reads, in one-letter code: tRNA-specific 2-thiouridylase MnmA (370 aa).

Residues 20–27 (GMSGGVDS) and M46 each bind ATP. The segment at 106–108 (NPD) is interaction with target base in tRNA. C111 (nucleophile) is an active-site residue. Residues C111 and C207 are joined by a disulfide bond. Position 135 (G135) interacts with ATP. Residues 157-159 (KDQ) are interaction with tRNA. The Cysteine persulfide intermediate role is filled by C207. The tract at residues 318–319 (RY) is interaction with tRNA.

It belongs to the MnmA/TRMU family.

It is found in the cytoplasm. It catalyses the reaction S-sulfanyl-L-cysteinyl-[protein] + uridine(34) in tRNA + AH2 + ATP = 2-thiouridine(34) in tRNA + L-cysteinyl-[protein] + A + AMP + diphosphate + H(+). Functionally, catalyzes the 2-thiolation of uridine at the wobble position (U34) of tRNA, leading to the formation of s(2)U34. The chain is tRNA-specific 2-thiouridylase MnmA from Polynucleobacter asymbioticus (strain DSM 18221 / CIP 109841 / QLW-P1DMWA-1) (Polynucleobacter necessarius subsp. asymbioticus).